We begin with the raw amino-acid sequence, 203 residues long: Small ribosomal subunit protein uS2 (203 aa).

This sequence belongs to the universal ribosomal protein uS2 family.

This chain is Small ribosomal subunit protein uS2, found in Methanopyrus kandleri (strain AV19 / DSM 6324 / JCM 9639 / NBRC 100938).